A 1798-amino-acid polypeptide reads, in one-letter code: DNA polymerase II large subunit (1798 aa).

The tract at residues 286 to 309 is disordered; that stretch reads EKGKSSEENKDESKAEDTGTESVA. One can recognise a DOD-type homing endonuclease domain in the interval 1184 to 1319; the sequence is VVGYYLAEGY…ETLLLAKFGI (136 aa). A disordered region spans residues 1699-1798; the sequence is TGHSNGKNGY…GISLDEFFGS (100 aa). Residues 1714 to 1731 are compositionally biased toward low complexity; that stretch reads GKNGKASKKSGSLASKLS. The span at 1733 to 1753 shows a compositional bias: basic and acidic residues; the sequence is KGKEPSKKKESAKPKRSEKVK.

This sequence belongs to the archaeal DNA polymerase II family. In terms of assembly, heterodimer of a large subunit and a small subunit. Post-translationally, this protein undergoes a protein self splicing that involves a post-translational excision of the intervening region (intein) followed by peptide ligation.

It carries out the reaction DNA(n) + a 2'-deoxyribonucleoside 5'-triphosphate = DNA(n+1) + diphosphate. The catalysed reaction is Exonucleolytic cleavage in the 3'- to 5'-direction to yield nucleoside 5'-phosphates.. In terms of biological role, possesses two activities: a DNA synthesis (polymerase) and an exonucleolytic activity that degrades single-stranded DNA in the 3'- to 5'-direction. Has a template-primer preference which is characteristic of a replicative DNA polymerase. The polypeptide is DNA polymerase II large subunit (polC) (Thermococcus kodakarensis (strain ATCC BAA-918 / JCM 12380 / KOD1) (Pyrococcus kodakaraensis (strain KOD1))).